Reading from the N-terminus, the 122-residue chain is Putative iron-sulfur cluster insertion protein ErpA (122 aa).

3 residues coordinate iron-sulfur cluster: Cys50, Cys114, and Cys116.

The protein belongs to the HesB/IscA family. In terms of assembly, homodimer. Iron-sulfur cluster serves as cofactor.

Functionally, required for insertion of 4Fe-4S clusters. The chain is Putative iron-sulfur cluster insertion protein ErpA from Bordetella petrii (strain ATCC BAA-461 / DSM 12804 / CCUG 43448).